The chain runs to 135 residues: uncharacterized protein (135 aa).

The region spanning 4 to 129 (SIVHIALVVN…YGNLWDLLQL (126 aa)) is the VOC domain.

To B.subtilis YwkD.

This is an uncharacterized protein from Shewanella frigidimarina (strain NCIMB 400).